Consider the following 348-residue polypeptide: Bombesin receptor-activated protein C6orf89 homolog (348 aa).

The Cytoplasmic segment spans residues 1 to 58 (MDLAANEISIYDKLSETVDLVRQTGHQCGMSEKAIEKFIRQLLEKNEPQRGPPQYPLL). Residues 59–79 (IAMYKVLLTLGLILFTAYFVI) traverse the membrane as a helical segment. The Extracellular segment spans residues 80–348 (QPFSSLAPEP…ICDGTTLSEL (269 aa)).

As to quaternary structure, homodimer. Interacts with BRS3. Interacts (via N-terminus) with SIN3B. In terms of processing, glycosylated.

Its subcellular location is the golgi apparatus membrane. It localises to the cytoplasm. In terms of biological role, exhibits histone deacetylase (HDAC) enhancer properties. May play a role in cell cycle progression and wound repair of bronchial epithelial cells. This Rattus norvegicus (Rat) protein is Bombesin receptor-activated protein C6orf89 homolog.